A 237-amino-acid chain; its full sequence is Octopine transport system permease protein OccQ (237 aa).

In terms of domain architecture, ABC transmembrane type-1 spans 22 to 222; the sequence is TGMTVAVASS…LITFISGQAF (201 aa). The next 4 membrane-spanning stretches (helical) occupy residues 24-44, 72-92, 96-116, and 201-221; these read MTVA…CLGA, LVIY…GSLF, GFVS…VSAA, and FSFY…SGQA.

This sequence belongs to the binding-protein-dependent transport system permease family. HisMQ subfamily.

The protein resides in the cell inner membrane. Component of the octopine active transport system probably consisting of four subunits: Q, M, P and T. The protein is Octopine transport system permease protein OccQ (occQ) of Rhizobium meliloti (Ensifer meliloti).